The primary structure comprises 443 residues: Xaa-Pro dipeptidase (443 aa).

Mn(2+) contacts are provided by D244, D255, H336, E381, and E420.

This sequence belongs to the peptidase M24B family. Bacterial-type prolidase subfamily. Requires Mn(2+) as cofactor.

It catalyses the reaction Xaa-L-Pro dipeptide + H2O = an L-alpha-amino acid + L-proline. Functionally, splits dipeptides with a prolyl residue in the C-terminal position. The chain is Xaa-Pro dipeptidase from Stenotrophomonas maltophilia (strain K279a).